Here is a 451-residue protein sequence, read N- to C-terminus: MKRKYFGTDGIRGQSNIFPMTPDLAMRVGIAVGTIFRNGAHRHRVVIGKDTRLSGYMLENAMVAGFTAAGLDVFLLGPIPTPGVAMLTRSLRADIGVMISASHNAFRDNGIKLFGPDGYKLSDDIEEKIEELLDQDMTRQLAKPEDIGRAKRVDGDIYRYIEQAKRTLPRDVTLTGLRIAIDCANGAAYKVAPSALWELGAEVVPIGTEPNGVNINLECGSTHPAALQKKVHEVRADIGIALDGDADRVLIIDEEGQVIDGDQLMAVIADSWAADGMLKGGGIAATVMSNLGLERYLQARRLKLHRTKVGDRYVVEQMRQDGLNVGGEQSGHIVLSDFGTTGDGLVAALQILAVVKRQGKTVSEICRRFEPVPQVLKNVRISAGKPLEDAGVKQAIADAEAQLAKNGRLLIRPSGTEPLIRVMAEGDDRGKVERIVDELVSVIGAVRNAAA.

Ser102 functions as the Phosphoserine intermediate in the catalytic mechanism. Mg(2+) contacts are provided by Ser102, Asp243, Asp245, and Asp247. The residue at position 102 (Ser102) is a Phosphoserine.

This sequence belongs to the phosphohexose mutase family. Mg(2+) serves as cofactor. Activated by phosphorylation.

It carries out the reaction alpha-D-glucosamine 1-phosphate = D-glucosamine 6-phosphate. Catalyzes the conversion of glucosamine-6-phosphate to glucosamine-1-phosphate. This chain is Phosphoglucosamine mutase, found in Sinorhizobium medicae (strain WSM419) (Ensifer medicae).